Here is a 269-residue protein sequence, read N- to C-terminus: Shikimate dehydrogenase (NADP(+)) (269 aa).

Residues 17–19 (SKS) and T64 each bind shikimate. Residue K68 is the Proton acceptor of the active site. Residue E80 coordinates NADP(+). Shikimate is bound by residues N89 and D105. NADP(+) contacts are provided by residues 130–134 (GAGGA), 154–159 (NRTHAK), and M213. A shikimate-binding site is contributed by Y215. G237 lines the NADP(+) pocket.

This sequence belongs to the shikimate dehydrogenase family. In terms of assembly, homodimer.

The catalysed reaction is shikimate + NADP(+) = 3-dehydroshikimate + NADPH + H(+). It participates in metabolic intermediate biosynthesis; chorismate biosynthesis; chorismate from D-erythrose 4-phosphate and phosphoenolpyruvate: step 4/7. Its function is as follows. Involved in the biosynthesis of the chorismate, which leads to the biosynthesis of aromatic amino acids. Catalyzes the reversible NADPH linked reduction of 3-dehydroshikimate (DHSA) to yield shikimate (SA). This Neisseria cinerea protein is Shikimate dehydrogenase (NADP(+)).